We begin with the raw amino-acid sequence, 141 residues long: Large ribosomal subunit protein uL11 (141 aa).

The protein belongs to the universal ribosomal protein uL11 family. As to quaternary structure, part of the ribosomal stalk of the 50S ribosomal subunit. Interacts with L10 and the large rRNA to form the base of the stalk. L10 forms an elongated spine to which L12 dimers bind in a sequential fashion forming a multimeric L10(L12)X complex. One or more lysine residues are methylated.

In terms of biological role, forms part of the ribosomal stalk which helps the ribosome interact with GTP-bound translation factors. This Chloroherpeton thalassium (strain ATCC 35110 / GB-78) protein is Large ribosomal subunit protein uL11.